Reading from the N-terminus, the 165-residue chain is MSIWVDADACPVVIKDMLYRAARRTNTTLTLVANSFLRVPPSPLIRAIQVPAGFDAADDLIAERVAAGDLVITADIPLAAAVLAKNAQALDPRGNWYTPGTIEERLRMRSMLDQLRGSGVDTGGPSAFSQRDSKSFAGELDRWLSRQRPQPDASAPQSADEPPTE.

Disordered stretches follow at residues 115–134 (LRGS…RDSK) and 139–165 (ELDR…PPTE).

This sequence belongs to the UPF0178 family.

This is UPF0178 protein Bphyt_5655 from Paraburkholderia phytofirmans (strain DSM 17436 / LMG 22146 / PsJN) (Burkholderia phytofirmans).